We begin with the raw amino-acid sequence, 257 residues long: Phosphonates import ATP-binding protein PhnC (257 aa).

In terms of domain architecture, ABC transporter spans 4–248 (IEFKDVNKVY…VFNDIYGRKL (245 aa)). 37-44 (GLSGAGKS) contributes to the ATP binding site.

The protein belongs to the ABC transporter superfamily. Phosphonates importer (TC 3.A.1.9.1) family. As to quaternary structure, the complex is composed of two ATP-binding proteins (PhnC), two transmembrane proteins (PhnE) and a solute-binding protein (PhnD).

It is found in the cell membrane. It carries out the reaction phosphonate(out) + ATP + H2O = phosphonate(in) + ADP + phosphate + H(+). Its function is as follows. Part of the ABC transporter complex PhnCDE involved in phosphonates import. Responsible for energy coupling to the transport system. This Staphylococcus haemolyticus (strain JCSC1435) protein is Phosphonates import ATP-binding protein PhnC.